Consider the following 579-residue polypeptide: MNRDNMDTTKRKEDHTKHTTDVIEFYEEGTAASSLNIATEKANSSPSILRRIINRAAWLSKKVDAMGVESTGIQRISPYERGTSKKQFLHVAGLWLSATGGLSSMSSFLLGPLLFGLSFRESVASSLISVTIGCLIAAYCSIMGPQSGCRQMVTARYLFGWWFVKLVALASIIGVMGWSVVNSVVGGEMLAAISNDKVPLWVGIVIVTVCSFLVAIFGIKQVIKVETYLSVPVLTAFLLLYISSSDKYSFVNAYVSKGNLDSSTRKGNWMSFFSLCYSITATWGSITADYYILFPEDTPYIQIFCLTFFGTFLPTCFVGILGLLLASVAMSYKPWSVEYDSHGMGGLLWAGFQRWNGFGKFCVVVLVFSLVSNNIINTYSAAFSIQLSSVFCAKIPRWFWSIVCTIICLVCALIGRNHFSTILGNFLPMIGYWISMYFILLFEENLVFRRFFLHLYTKEFPTVTGEINGPELVGSSKEVEKDAVTNIHLLKRKHKVTKHRYNWDKWEDYEVLTHGYAATFAFIVGVAGVVVGMAQAYWIGPIAAKFGEYGGDVAMWLSMAFSGVVYPPCRYLELRKFGR.

Topologically, residues 1–98 are cytoplasmic; it reads MNRDNMDTTK…LHVAGLWLSA (98 aa). The chain crosses the membrane as a helical span at residues 99 to 119; that stretch reads TGGLSSMSSFLLGPLLFGLSF. The Extracellular segment spans residues 120–122; the sequence is RES. A helical transmembrane segment spans residues 123–143; the sequence is VASSLISVTIGCLIAAYCSIM. The Cytoplasmic segment spans residues 144–157; sequence GPQSGCRQMVTARY. The chain crosses the membrane as a helical span at residues 158 to 178; it reads LFGWWFVKLVALASIIGVMGW. The Extracellular segment spans residues 179 to 198; it reads SVVNSVVGGEMLAAISNDKV. The helical transmembrane segment at 199-219 threads the bilayer; sequence PLWVGIVIVTVCSFLVAIFGI. Residues 220–221 are Cytoplasmic-facing; sequence KQ. Residues 222 to 242 traverse the membrane as a helical segment; the sequence is VIKVETYLSVPVLTAFLLLYI. The Extracellular portion of the chain corresponds to 243 to 274; the sequence is SSSDKYSFVNAYVSKGNLDSSTRKGNWMSFFS. A helical membrane pass occupies residues 275-295; it reads LCYSITATWGSITADYYILFP. The Cytoplasmic portion of the chain corresponds to 296 to 302; it reads EDTPYIQ. Residues 303–323 traverse the membrane as a helical segment; the sequence is IFCLTFFGTFLPTCFVGILGL. The Extracellular portion of the chain corresponds to 324–362; that stretch reads LLASVAMSYKPWSVEYDSHGMGGLLWAGFQRWNGFGKFC. Residues 363 to 383 traverse the membrane as a helical segment; it reads VVVLVFSLVSNNIINTYSAAF. Residues 384-394 lie on the Cytoplasmic side of the membrane; the sequence is SIQLSSVFCAK. Residues 395–415 traverse the membrane as a helical segment; sequence IPRWFWSIVCTIICLVCALIG. Residues 416-421 lie on the Extracellular side of the membrane; the sequence is RNHFST. A helical transmembrane segment spans residues 422–442; that stretch reads ILGNFLPMIGYWISMYFILLF. Topologically, residues 443–519 are cytoplasmic; that stretch reads EENLVFRRFF…EVLTHGYAAT (77 aa). Residues 520–540 form a helical membrane-spanning segment; it reads FAFIVGVAGVVVGMAQAYWIG. The Extracellular portion of the chain corresponds to 541–545; it reads PIAAK. Residues 546 to 566 traverse the membrane as a helical segment; sequence FGEYGGDVAMWLSMAFSGVVY. At 567 to 579 the chain is on the cytoplasmic side; the sequence is PPCRYLELRKFGR.

The protein belongs to the purine-cytosine permease (2.A.39) family.

Its subcellular location is the membrane. Thiamine-regulated, high affinity import carrier of pyridoxine, pyridoxal and pyridoxamine. In Saccharomyces cerevisiae (strain ATCC 204508 / S288c) (Baker's yeast), this protein is Vitamin B6 transporter TPN1 (TPN1).